The chain runs to 321 residues: Lipoyl synthase (321 aa).

Residues Cys68, Cys73, Cys79, Cys94, Cys98, Cys101, and Ser308 each coordinate [4Fe-4S] cluster. One can recognise a Radical SAM core domain in the interval Phe80–Thr297.

The protein belongs to the radical SAM superfamily. Lipoyl synthase family. [4Fe-4S] cluster is required as a cofactor.

Its subcellular location is the cytoplasm. The enzyme catalyses [[Fe-S] cluster scaffold protein carrying a second [4Fe-4S](2+) cluster] + N(6)-octanoyl-L-lysyl-[protein] + 2 oxidized [2Fe-2S]-[ferredoxin] + 2 S-adenosyl-L-methionine + 4 H(+) = [[Fe-S] cluster scaffold protein] + N(6)-[(R)-dihydrolipoyl]-L-lysyl-[protein] + 4 Fe(3+) + 2 hydrogen sulfide + 2 5'-deoxyadenosine + 2 L-methionine + 2 reduced [2Fe-2S]-[ferredoxin]. Its pathway is protein modification; protein lipoylation via endogenous pathway; protein N(6)-(lipoyl)lysine from octanoyl-[acyl-carrier-protein]: step 2/2. Catalyzes the radical-mediated insertion of two sulfur atoms into the C-6 and C-8 positions of the octanoyl moiety bound to the lipoyl domains of lipoate-dependent enzymes, thereby converting the octanoylated domains into lipoylated derivatives. The protein is Lipoyl synthase of Shewanella halifaxensis (strain HAW-EB4).